A 183-amino-acid chain; its full sequence is Threonylcarbamoyl-AMP synthase (183 aa).

Positions 1 to 183 constitute a YrdC-like domain; the sequence is MNREQIAEAL…LRTNQLFRQG (183 aa).

It belongs to the SUA5 family. TsaC subfamily.

Its subcellular location is the cytoplasm. The enzyme catalyses L-threonine + hydrogencarbonate + ATP = L-threonylcarbamoyladenylate + diphosphate + H2O. Functionally, required for the formation of a threonylcarbamoyl group on adenosine at position 37 (t(6)A37) in tRNAs that read codons beginning with adenine. Catalyzes the conversion of L-threonine, HCO(3)(-)/CO(2) and ATP to give threonylcarbamoyl-AMP (TC-AMP) as the acyladenylate intermediate, with the release of diphosphate. The chain is Threonylcarbamoyl-AMP synthase from Haemophilus influenzae (strain 86-028NP).